We begin with the raw amino-acid sequence, 1594 residues long: Protein SHORTAGE IN CHIASMATA 1 (1594 aa).

Disordered regions lie at residues 1148 to 1180 (DSRSVMTDSSSSVSSGPDSDTHHVSVHSGSKKK), 1239 to 1283 (APFK…QPDF), 1396 to 1426 (AADIDSSSERYATEKDSKYDNNTSLRGYADN), 1491 to 1523 (RSRARKQQQSLPSYASPPSLETPGNIKKANTKR), and 1536 to 1594 (GGNK…LVWK). Over residues 1151–1165 (SVMTDSSSSVSSGPD) the composition is skewed to low complexity. 2 stretches are compositionally biased toward basic and acidic residues: residues 1254-1265 (PSKDPERFDKKS) and 1402-1414 (SSERYATEKDSKY). Positions 1577 to 1594 (QSLSYTANGTGQTKLVWK) are enriched in polar residues.

It belongs to the XPF family. In terms of assembly, interacts with PTD. Highest levels in young buds, where male meiosis occurs. Also present at low levels in plantlets, leaves, flowers, and roots.

It is found in the nucleus. Functionally, essential for the formation of class I meiotic crossovers. This is Protein SHORTAGE IN CHIASMATA 1 from Arabidopsis thaliana (Mouse-ear cress).